We begin with the raw amino-acid sequence, 410 residues long: NIPA-like protein 3 (410 aa).

The tract at residues 1-24 (MDGAHSAGLQLQPLPPTSGATSTS) is disordered. A run of 9 helical transmembrane segments spans residues 37–57 (NLIGALLAIFGHLVVSIALNL), 80–100 (WWLGLLLLLLGELGVFASYAF), 105–125 (LIVPLSAVSVIASAIIGIIFI), 139–159 (VLSFVGCGLAIVGTYLLVTFA), 175–195 (LVSWPFLLYMLVAIVLFCLLL), 206–226 (IVVILLLVALLGSMTVVTVKA), 244–264 (PIFYVMFVCMVATAIYQATFL), 275–295 (LIASVGYILSTTAAITAGAIF), and 304–324 (ALHICMFALGCLIAFLGVFLI). A Phosphoserine modification is found at serine 376. The disordered stretch occupies residues 389 to 410 (EEHSSRSTPGVPYRVLEHTKKE).

This sequence belongs to the NIPA family.

It localises to the membrane. The chain is NIPA-like protein 3 (Nipal3) from Mus musculus (Mouse).